A 148-amino-acid chain; its full sequence is Lysozyme C-1 (148 aa).

An N-terminal signal peptide occupies residues 1 to 18 (MKALLTLGLLLLSVTAQA). One can recognise a C-type lysozyme domain in the interval 19 to 148 (KVYNRCELAR…LSQYIRNCGV (130 aa)). Disulfide bonds link Cys24-Cys146, Cys48-Cys134, Cys83-Cys99, and Cys95-Cys113. Residues Glu53 and Asp71 contribute to the active site.

The protein belongs to the glycosyl hydrolase 22 family. As to quaternary structure, monomer. As to expression, expressed strongly only in small intestine.

It localises to the secreted. It carries out the reaction Hydrolysis of (1-&gt;4)-beta-linkages between N-acetylmuramic acid and N-acetyl-D-glucosamine residues in a peptidoglycan and between N-acetyl-D-glucosamine residues in chitodextrins.. In terms of biological role, lysozymes have primarily a bacteriolytic function; those in tissues and body fluids are associated with the monocyte-macrophage system and enhance the activity of immunoagents. Lyz1 is active against a range of Gram-positive and Gram-negative bacteria. Less effective than Lyz2 in killing Gram-negative bacteria. Lyz1 and Lyz2 are equally effective in killing Gram-positive bacteria. The polypeptide is Lysozyme C-1 (Lyz1) (Mus musculus (Mouse)).